Consider the following 172-residue polypeptide: NADH-quinone oxidoreductase subunit B (172 aa).

[4Fe-4S] cluster contacts are provided by Cys42, Cys43, Cys107, and Cys136.

Belongs to the complex I 20 kDa subunit family. NDH-1 is composed of 14 different subunits. Subunits NuoB, C, D, E, F, and G constitute the peripheral sector of the complex. [4Fe-4S] cluster serves as cofactor.

The protein resides in the cell inner membrane. The enzyme catalyses a quinone + NADH + 5 H(+)(in) = a quinol + NAD(+) + 4 H(+)(out). Its function is as follows. NDH-1 shuttles electrons from NADH, via FMN and iron-sulfur (Fe-S) centers, to quinones in the respiratory chain. The immediate electron acceptor for the enzyme in this species is believed to be ubiquinone. Couples the redox reaction to proton translocation (for every two electrons transferred, four hydrogen ions are translocated across the cytoplasmic membrane), and thus conserves the redox energy in a proton gradient. This Sulfurovum sp. (strain NBC37-1) protein is NADH-quinone oxidoreductase subunit B.